The primary structure comprises 384 residues: Cell adhesion molecule CEACAM18 (384 aa).

An N-terminal signal peptide occupies residues 1–30; sequence MDLSRPRWSLWRRVFLMASLLACGICQASG. Residues asparagine 108, asparagine 112, asparagine 121, asparagine 162, and asparagine 270 are each glycosylated (N-linked (GlcNAc...) asparagine). In terms of domain architecture, Ig-like C2-type spans 227 to 314; the sequence is PDYVLLRSNP…LIMYMDVRIQ (88 aa). Cysteine 255 and cysteine 296 are disulfide-bonded. Residues 358 to 384 form a disordered region; that stretch reads QPLLNQDKSGSMSVHPRPEDKTRRASR. Over residues 359 to 369 the composition is skewed to polar residues; sequence PLLNQDKSGSM. Residues 373-384 show a composition bias toward basic and acidic residues; sequence PRPEDKTRRASR.

It belongs to the immunoglobulin superfamily. CEA family.

The polypeptide is Cell adhesion molecule CEACAM18 (Homo sapiens (Human)).